The sequence spans 304 residues: Probable solute-binding protein AdeT1 (304 aa).

This sequence belongs to the bacterial solute-binding protein 7 family.

In terms of biological role, mediates antimicrobial resistance via active efflux. Contributes to resistance to antibiotics such as chloramphenicol, erythromycin and novobiocin. May be part of a tripartite ATP-independent periplasmic (TRAP) transport system. This chain is Probable solute-binding protein AdeT1, found in Acinetobacter baumannii.